The primary structure comprises 274 residues: Large ribosomal subunit protein uL2 (274 aa).

A disordered region spans residues 224–274 (AMNPVDHPHGGGEGRTGEGQVPVSPWNTMTKGYRTRSNKRTQTFIVSRRKK). Residues 229–239 (DHPHGGGEGRT) show a composition bias toward basic and acidic residues.

The protein belongs to the universal ribosomal protein uL2 family. In terms of assembly, part of the 50S ribosomal subunit. Forms a bridge to the 30S subunit in the 70S ribosome.

In terms of biological role, one of the primary rRNA binding proteins. Required for association of the 30S and 50S subunits to form the 70S ribosome, for tRNA binding and peptide bond formation. It has been suggested to have peptidyltransferase activity; this is somewhat controversial. Makes several contacts with the 16S rRNA in the 70S ribosome. In Methylibium petroleiphilum (strain ATCC BAA-1232 / LMG 22953 / PM1), this protein is Large ribosomal subunit protein uL2.